The following is a 114-amino-acid chain: Flagellar hook-basal body complex protein FliE (114 aa).

Belongs to the FliE family.

It localises to the bacterial flagellum basal body. In Desulfitobacterium hafniense (strain DSM 10664 / DCB-2), this protein is Flagellar hook-basal body complex protein FliE.